A 612-amino-acid chain; its full sequence is UvrABC system protein C (612 aa).

Residues Thr-20–Ile-98 enclose the GIY-YIG domain. One can recognise a UVR domain in the interval Ser-208–Leu-243.

It belongs to the UvrC family. In terms of assembly, interacts with UvrB in an incision complex.

The protein localises to the cytoplasm. Its function is as follows. The UvrABC repair system catalyzes the recognition and processing of DNA lesions. UvrC both incises the 5' and 3' sides of the lesion. The N-terminal half is responsible for the 3' incision and the C-terminal half is responsible for the 5' incision. The sequence is that of UvrABC system protein C from Francisella tularensis subsp. tularensis (strain FSC 198).